Reading from the N-terminus, the 240-residue chain is Heme oxygenase 1 (240 aa).

The heme b site is built by Arg10, His17, Tyr125, Lys168, and Arg172.

It belongs to the heme oxygenase family.

The enzyme catalyses heme b + 3 reduced [NADPH--hemoprotein reductase] + 3 O2 = biliverdin IXalpha + CO + Fe(2+) + 3 oxidized [NADPH--hemoprotein reductase] + 3 H2O + H(+). Catalyzes the opening of the heme ring with the release of iron. Key enzyme in the synthesis of the chromophoric part of the photosynthetic antennae. This chain is Heme oxygenase 1 (pbsA1), found in Synechocystis sp. (strain ATCC 27184 / PCC 6803 / Kazusa).